Here is a 230-residue protein sequence, read N- to C-terminus: Protein FAM3A (230 aa).

The N-terminal stretch at 1 to 33 (MRLAGPLRIVVLVVSVGVTWIVVSILLGGPGSG) is a signal peptide. 2 disulfides stabilise this stretch: Cys-59-Cys-87 and Cys-65-Cys-222. Positions 68-226 (EHLAFRVVSG…LEMEGCIPRR (159 aa)) constitute a GG-type lectin domain.

Belongs to the FAM3 family. In terms of tissue distribution, in similar amounts in testis, pancreas, adrenal, placenta, brain, fetal brain, liver, kidney, skeletal muscle and heart.

It localises to the secreted. In terms of biological role, may act as a defensin against invading fungal microorganisms. This is Protein FAM3A (FAM3A) from Homo sapiens (Human).